The chain runs to 410 residues: MFLVLERKMRTHQVFPLPLLLVIASVASENASTSRGCGLDLLPQYVSLCDLDAIWGIVVEAVAGAGALITLLLMLILLVRLPFIKDKERKRPVCLHFLFLLGTLGLFGLTFAFIIQMDETICSIRRFLWGVLFALCFSCLLSQAWRVRRLVRQGTSPASWQLVSLALCLMLVQVIIATEWLVLTVLRDTKPACAYEPMDFVMALIYDMVLLAITLAQSLFTLCGKFKRWKVNGAFILVTTFLSALIWVVWMTMYLFGNSLIKQGDAWSDPTLAITLAASGWVFVIFHAIPEIHYTLLPPLQENPPNYFDTSQPRMRETAFDEEMHLPRAYMENKAFSMDEHNAALRSAVGFSNGSLEQRSSSLGKKPSSLGNRPSAPFRSNVYQPTEMAVVLNGGTIPTAPPSHTGRHHW.

An N-terminal signal peptide occupies residues 1 to 28 (MFLVLERKMRTHQVFPLPLLLVIASVAS). The Extracellular portion of the chain corresponds to 29–56 (ENASTSRGCGLDLLPQYVSLCDLDAIWG). An N-linked (GlcNAc...) asparagine glycan is attached at asparagine 30. A helical transmembrane segment spans residues 57-77 (IVVEAVAGAGALITLLLMLIL). At 78-94 (LVRLPFIKDKERKRPVC) the chain is on the cytoplasmic side. The helical transmembrane segment at 95-115 (LHFLFLLGTLGLFGLTFAFII) threads the bilayer. Residues 116–126 (QMDETICSIRR) are Extracellular-facing. A helical transmembrane segment spans residues 127 to 147 (FLWGVLFALCFSCLLSQAWRV). Topologically, residues 148–164 (RRLVRQGTSPASWQLVS) are cytoplasmic. The chain crosses the membrane as a helical span at residues 165 to 185 (LALCLMLVQVIIATEWLVLTV). The Extracellular portion of the chain corresponds to 186-199 (LRDTKPACAYEPMD). Residues 200–220 (FVMALIYDMVLLAITLAQSLF) form a helical membrane-spanning segment. Over 221-234 (TLCGKFKRWKVNGA) the chain is Cytoplasmic. Residues 235-255 (FILVTTFLSALIWVVWMTMYL) traverse the membrane as a helical segment. Over 256–271 (FGNSLIKQGDAWSDPT) the chain is Extracellular. The chain crosses the membrane as a helical span at residues 272 to 292 (LAITLAASGWVFVIFHAIPEI). Over 293 to 410 (HYTLLPPLQE…PPSHTGRHHW (118 aa)) the chain is Cytoplasmic. The residue at position 355 (serine 355) is a Phosphoserine. Residues 356-381 (LEQRSSSLGKKPSSLGNRPSAPFRSN) are disordered. The segment covering 360–371 (SSSLGKKPSSLG) has biased composition (low complexity).

The protein belongs to the G-protein coupled receptor 3 family.

The protein localises to the cell membrane. It is found in the cytoplasmic vesicle membrane. Functionally, G-protein coupled receptor involved in the regulation of cell volume. In Mus musculus (Mouse), this protein is G-protein coupled receptor family C group 5 member B (Gprc5b).